The following is a 370-amino-acid chain: Developmentally-regulated GTP-binding protein 1 homolog (370 aa).

Residues 65–292 (ARVGLIGFPS…LLDKIWEYLK (228 aa)) enclose the OBG-type G domain. GTP-binding positions include 71–78 (GFPSVGKS), 117–121 (DLPGI), and 250–253 (NKID). Residues 292 to 369 (KLIRVYTKPK…ADEDIVQIVK (78 aa)) enclose the TGS domain.

This sequence belongs to the TRAFAC class OBG-HflX-like GTPase superfamily. OBG GTPase family.

The protein is Developmentally-regulated GTP-binding protein 1 homolog (drg1) of Dictyostelium discoideum (Social amoeba).